The primary structure comprises 392 residues: 8-amino-7-oxononanoate synthase (392 aa).

Arginine 21 serves as a coordination point for substrate. Residue 114–115 participates in pyridoxal 5'-phosphate binding; that stretch reads GY. Residue histidine 139 coordinates substrate. Pyridoxal 5'-phosphate-binding positions include serine 187, 212 to 215, and 243 to 246; these read DEAH and TFGK. Lysine 246 bears the N6-(pyridoxal phosphate)lysine mark. A substrate-binding site is contributed by threonine 359.

It belongs to the class-II pyridoxal-phosphate-dependent aminotransferase family. BioF subfamily. Homodimer. Pyridoxal 5'-phosphate serves as cofactor.

The catalysed reaction is 6-carboxyhexanoyl-[ACP] + L-alanine + H(+) = (8S)-8-amino-7-oxononanoate + holo-[ACP] + CO2. Its pathway is cofactor biosynthesis; biotin biosynthesis. Its function is as follows. Catalyzes the decarboxylative condensation of pimeloyl-[acyl-carrier protein] and L-alanine to produce 8-amino-7-oxononanoate (AON), [acyl-carrier protein], and carbon dioxide. This is 8-amino-7-oxononanoate synthase from Chlorobaculum parvum (strain DSM 263 / NCIMB 8327) (Chlorobium vibrioforme subsp. thiosulfatophilum).